The following is a 501-amino-acid chain: ATP-dependent rRNA helicase RRP3 (501 aa).

Residues 3–44 (KIVKRKEKKANDELTSLAEKIRAKALENQKKLIEAEKEGGSE) are a coiled coil. Residues 36–79 (EAEKEGGSESDSEEDATAEKKKVLKSKSKSTVSTQNENTNEDES) form a disordered region. 3 positions are modified to phosphoserine: Ser-43, Ser-45, and Ser-47. A Q motif motif is present at residues 81 to 109 (ESFSELNLVPELIQACKNLNYSKPTPIQS). The Helicase ATP-binding domain occupies 112 to 284 (IPPALEGHDI…RASLTNPVKC (173 aa)). 125–132 (AQTGSGKT) provides a ligand contact to ATP. A DEAD box motif is present at residues 231–234 (DEAD). Residues 307–461 (LKNTYLIYLL…NIILTLRDSV (155 aa)) enclose the Helicase C-terminal domain. Residues 480 to 501 (IARGKGRRGRMMTRENMDMGER) are disordered. The segment covering 491–501 (MTRENMDMGER) has biased composition (basic and acidic residues).

This sequence belongs to the DEAD box helicase family. DDX47/RRP3 subfamily. As to quaternary structure, interacts with the SSU processome.

The protein resides in the nucleus. It catalyses the reaction ATP + H2O = ADP + phosphate + H(+). Its function is as follows. ATP-dependent rRNA helicase required for pre-ribosomal RNA processing. Involved in the maturation of the 35S-pre-rRNA and to its cleavage to mature 18S rRNA. This is ATP-dependent rRNA helicase RRP3 from Saccharomyces cerevisiae (strain YJM789) (Baker's yeast).